The following is a 140-amino-acid chain: Putative pre-16S rRNA nuclease (140 aa).

Belongs to the YqgF nuclease family.

It localises to the cytoplasm. Its function is as follows. Could be a nuclease involved in processing of the 5'-end of pre-16S rRNA. This Vibrio vulnificus (strain YJ016) protein is Putative pre-16S rRNA nuclease.